The primary structure comprises 284 residues: RNase adapter protein RapZ (284 aa).

G8–S15 contributes to the ATP binding site. GTP is bound at residue D56–N59. Residues R266–T284 form an RNA-binding region.

Belongs to the RapZ-like family. RapZ subfamily. Homotrimer.

Modulates the synthesis of GlmS, by affecting the processing and stability of the regulatory small RNA GlmZ. When glucosamine-6-phosphate (GlcN6P) concentrations are high in the cell, RapZ binds GlmZ and targets it to cleavage by RNase E. Consequently, GlmZ is inactivated and unable to activate GlmS synthesis. Under low GlcN6P concentrations, RapZ is sequestered and inactivated by an other regulatory small RNA, GlmY, preventing GlmZ degradation and leading to synthesis of GlmS. This chain is RNase adapter protein RapZ, found in Salmonella arizonae (strain ATCC BAA-731 / CDC346-86 / RSK2980).